A 590-amino-acid chain; its full sequence is 2-isopropylmalate synthase (590 aa).

Residues 40 to 314 (PRWCAVDLRD…DPQIDFSDID (275 aa)) form the Pyruvate carboxyltransferase domain. Mg(2+)-binding residues include Asp49, His253, His255, and Asn289. A regulatory domain region spans residues 456-590 (APETESDAKW…SSVPAELAGV (135 aa)).

Belongs to the alpha-IPM synthase/homocitrate synthase family. LeuA type 2 subfamily. As to quaternary structure, homodimer. It depends on Mg(2+) as a cofactor.

The protein resides in the cytoplasm. It catalyses the reaction 3-methyl-2-oxobutanoate + acetyl-CoA + H2O = (2S)-2-isopropylmalate + CoA + H(+). The protein operates within amino-acid biosynthesis; L-leucine biosynthesis; L-leucine from 3-methyl-2-oxobutanoate: step 1/4. In terms of biological role, catalyzes the condensation of the acetyl group of acetyl-CoA with 3-methyl-2-oxobutanoate (2-ketoisovalerate) to form 3-carboxy-3-hydroxy-4-methylpentanoate (2-isopropylmalate). This chain is 2-isopropylmalate synthase, found in Leifsonia xyli subsp. xyli (strain CTCB07).